The sequence spans 73 residues: UPF0270 protein PMI2817 (73 aa).

The protein belongs to the UPF0270 family.

The polypeptide is UPF0270 protein PMI2817 (Proteus mirabilis (strain HI4320)).